The chain runs to 192 residues: Ion-translocating oxidoreductase complex subunit B (192 aa).

Residues 1-26 form a hydrophobic region; the sequence is MSAVWIAVIAISLLGLIFGLILGYAS. Residues 32 to 91 form the 4Fe-4S domain; that stretch reads QDDPVVEKIDELLPQSQCGQCGYPGCRPYAEAVGAQGEKINRCAPGGEAVMLKIAALLNV. Residues C49, C52, C57, C74, C117, C120, C123, C127, C147, C150, C153, and C157 each coordinate [4Fe-4S] cluster. 4Fe-4S ferredoxin-type domains are found at residues 108–137 and 138–167; these read MLAVIDEPNCIGCTKCIQACPVDAIVGATR and AMHTVMNDLCTGCNLCVAPCPTQCISLVPV.

It belongs to the 4Fe4S bacterial-type ferredoxin family. RnfB subfamily. The complex is composed of six subunits: RnfA, RnfB, RnfC, RnfD, RnfE and RnfG. Requires [4Fe-4S] cluster as cofactor.

It localises to the cell inner membrane. Its function is as follows. Part of a membrane-bound complex that couples electron transfer with translocation of ions across the membrane. The chain is Ion-translocating oxidoreductase complex subunit B from Klebsiella pneumoniae (strain 342).